The chain runs to 685 residues: Tyrosinase (685 aa).

Ser2 carries the N-acetylserine modification. Cu cation-binding residues include His67, His97, His106, His278, His282, and His307. Residues 95–97 (CTH) constitute a cross-link (2'-(S-cysteinyl)-histidine (Cys-His)). Residues 409-685 (ANFVENVADR…PCGHGPEDHI (277 aa)) constitute a propeptide, could be involved in enzyme activation.

The protein belongs to the tyrosinase family. The cofactor is Cu(2+).

The enzyme catalyses 2 L-dopa + O2 = 2 L-dopaquinone + 2 H2O. It catalyses the reaction L-tyrosine + O2 = L-dopaquinone + H2O. This is a copper-containing oxidase that functions in the formation of pigments such as melanins and other polyphenolic compounds. The sequence is that of Tyrosinase (T) from Neurospora crassa (strain ATCC 24698 / 74-OR23-1A / CBS 708.71 / DSM 1257 / FGSC 987).